The sequence spans 456 residues: F-box/FBD/LRR-repeat protein At1g13780 (456 aa).

Positions 9 to 55 constitute an F-box domain; that stretch reads FDRISELPESLISQILLHLPTKASVKTSVLSTRWKNLWLNVPGLDLN. LRR repeat units follow at residues 197-220, 243-266, 302-325, and 355-379; these read LEEL…SLKR, APGL…NLTS, ISSV…SKVG, and FPNL…ELVN. The FBD domain occupies 372 to 424; that stretch reads MEKFELVNVPRCFVSTLEHVEIKGLFDWGEQDMKIASYFLENSAVLKKLILSF.

The chain is F-box/FBD/LRR-repeat protein At1g13780 from Arabidopsis thaliana (Mouse-ear cress).